Reading from the N-terminus, the 391-residue chain is Chorismate synthase (391 aa).

Arg48 contributes to the NADP(+) binding site. Residues 126–128 (RAS), Gly286, 301–305 (KPTSS), and Arg328 contribute to the FMN site.

The protein belongs to the chorismate synthase family. The cofactor is FMNH2.

The enzyme catalyses 5-O-(1-carboxyvinyl)-3-phosphoshikimate = chorismate + phosphate. It functions in the pathway metabolic intermediate biosynthesis; chorismate biosynthesis; chorismate from D-erythrose 4-phosphate and phosphoenolpyruvate: step 7/7. Catalyzes the anti-1,4-elimination of the C-3 phosphate and the C-6 proR hydrogen from 5-enolpyruvylshikimate-3-phosphate (EPSP) to yield chorismate, which is the branch point compound that serves as the starting substrate for the three terminal pathways of aromatic amino acid biosynthesis. This reaction introduces a second double bond into the aromatic ring system. This is Chorismate synthase from Saccharolobus solfataricus (strain ATCC 35092 / DSM 1617 / JCM 11322 / P2) (Sulfolobus solfataricus).